A 516-amino-acid chain; its full sequence is D-alanine--D-alanyl carrier protein ligase (516 aa).

Residue 156–157 (TS) coordinates ATP. Residue Asp203 coordinates D-alanine. ATP is bound at residue 298-303 (NAYGPT). Val307 lines the D-alanine pocket. ATP contacts are provided by residues Asp389, 401-404 (YGGR), and Lys503. Lys503 contributes to the D-alanine binding site.

The protein belongs to the ATP-dependent AMP-binding enzyme family. DltA subfamily.

The protein localises to the cytoplasm. It catalyses the reaction holo-[D-alanyl-carrier protein] + D-alanine + ATP = D-alanyl-[D-alanyl-carrier protein] + AMP + diphosphate. It participates in cell wall biogenesis; lipoteichoic acid biosynthesis. Functionally, catalyzes the first step in the D-alanylation of lipoteichoic acid (LTA), the activation of D-alanine and its transfer onto the D-alanyl carrier protein (Dcp) DltC. In an ATP-dependent two-step reaction, forms a high energy D-alanyl-AMP intermediate, followed by transfer of the D-alanyl residue as a thiol ester to the phosphopantheinyl prosthetic group of the Dcp. D-alanylation of LTA plays an important role in modulating the properties of the cell wall in Gram-positive bacteria, influencing the net charge of the cell wall. This is D-alanine--D-alanyl carrier protein ligase from Streptococcus pneumoniae serotype 4 (strain ATCC BAA-334 / TIGR4).